The following is a 295-amino-acid chain: ATP synthase subunit a (295 aa).

7 helical membrane passes run 41-61, 101-121, 129-149, 161-181, 191-211, 222-242, and 244-264; these read KWSA…WLGF, YLTI…IPVA, IALP…VGIR, LVPA…IEFV, LAIR…VFAL, FVFG…ELMI, and VLQA…AISS.

This sequence belongs to the ATPase A chain family. F-type ATPases have 2 components, CF(1) - the catalytic core - and CF(0) - the membrane proton channel. CF(1) has five subunits: alpha(3), beta(3), gamma(1), delta(1), epsilon(1). CF(0) has three main subunits: a(1), b(2) and c(9-12). The alpha and beta chains form an alternating ring which encloses part of the gamma chain. CF(1) is attached to CF(0) by a central stalk formed by the gamma and epsilon chains, while a peripheral stalk is formed by the delta and b chains.

The protein resides in the cell membrane. Its function is as follows. Key component of the proton channel; it plays a direct role in the translocation of protons across the membrane. The protein is ATP synthase subunit a of Parafrankia sp. (strain EAN1pec).